Consider the following 245-residue polypeptide: tRNA pseudouridine synthase A (245 aa).

Asp52 functions as the Nucleophile in the catalytic mechanism. Tyr111 provides a ligand contact to substrate.

The protein belongs to the tRNA pseudouridine synthase TruA family. In terms of assembly, homodimer.

The catalysed reaction is uridine(38/39/40) in tRNA = pseudouridine(38/39/40) in tRNA. Its function is as follows. Formation of pseudouridine at positions 38, 39 and 40 in the anticodon stem and loop of transfer RNAs. This is tRNA pseudouridine synthase A from Wolbachia pipientis subsp. Culex pipiens (strain wPip).